A 1315-amino-acid polypeptide reads, in one-letter code: Claspin (1315 aa).

Disordered stretches follow at residues 22–276 (EAAD…AARL) and 345–474 (PADA…EQKT). Serine 26, serine 42, serine 46, serine 53, serine 65, and serine 67 each carry phosphoserine. Over residues 65-74 (SDSEAEDRDD) the composition is skewed to acidic residues. Residues 91-101 (NLHSGKSQSRS) show a composition bias toward polar residues. The segment covering 108 to 118 (DSDESDMEETP) has biased composition (acidic residues). Residues serine 109, serine 112, and serine 119 each carry the phosphoserine modification. The span at 119–128 (SQESPETQEA) shows a compositional bias: polar residues. Composition is skewed to basic and acidic residues over residues 153–178 (LLRE…MEKI) and 186–197 (TRCEESDADRPL). Residues 159 to 187 (EGKAKSKRRLEKEERTMEKIRRLKKKETR) adopt a coiled-coil conformation. Acidic residues predominate over residues 205–228 (EDSDLFETGLEEENDSALEDEESL). Serine 220 is modified (phosphoserine). Positions 235-245 (VKNKVKNRKKK) are enriched in basic residues. Serine 255 carries the post-translational modification Phosphoserine. 2 stretches are compositionally biased toward basic and acidic residues: residues 391–415 (ACGK…DDRP) and 455–470 (EELK…EGMP). Serine 522 carries the post-translational modification Phosphoserine. Residues 599–626 (EKLQMLKAKLQEAMKLRRLEERQKRQAL) are a coiled coil. The interval 625-691 (ALFKLDNEDG…SSDIGKSVAL (67 aa)) is disordered. Residues 632–657 (EDGFEEEEEEEEMTDESEEDGEEETT) are compositionally biased toward acidic residues. The segment covering 669–679 (KDEKETDKENT) has biased composition (basic and acidic residues). 5 positions are modified to phosphoserine: serine 698, serine 701, serine 709, serine 722, and serine 740. The interval 713 to 750 (MGYFPTEEKSETDEYLAKQSDKLDEDDSSSLLTKESSH) is disordered. Residues 741 to 750 (SSLLTKESSH) are compositionally biased toward low complexity. Residues serine 785, serine 787, serine 810, serine 816, and serine 823 each carry the phosphoserine modification. Residue lysine 868 is modified to N6-acetyllysine. 2 CKB motif repeats span residues 887–896 (ELLDLCTGQF) and 917–926 (ELLNLCSGKF). A Phosphothreonine; by CHEK1 modification is found at threonine 893. 2 disordered regions span residues 924–1002 (GKFP…NDEE) and 1032–1052 (EDEA…DGEE). Residue serine 932 is modified to Phosphoserine. A CKB motif 3 repeat occupies 954–963 (EALALCSGSF). The tract at residues 966–1063 (DREEEGEEEE…DEYEEDVIDE (98 aa)) is acidic patch. Acidic residues-rich tracts occupy residues 967-977 (REEEGEEEEFG), 990-1002 (SDED…NDEE), and 1043-1052 (GSEDEYDGEE). 3 positions are modified to phosphoserine: serine 990, serine 996, and serine 998. A coiled-coil region spans residues 1001–1036 (EELALDLEDDEEELLKQSEKMKRQMRLKKYLEDEAE). Serine 1133 and serine 1265 each carry phosphoserine. Residues 1264–1315 (LSPTKAEAAKDSSKPQVRRRGLSSMMSPSPKRLKTNGSSPGPKRSIFRYLES) are disordered.

This sequence belongs to the claspin family. Interacts (phosphorylation-dependent) with CHEK1; regulates CLSPN function in checkpoint for DNA damage and replication. Interacts with ATR and RAD9A and these interactions are slightly reduced during checkpoint activation. Interacts with BRCA1 and this interaction increases during checkpoint activation. Interacts with TIMELESS; the interaction is required for leading-strand replication. Associates with the MCM2-7 complex and other replisome factors. Interacts (via the acidic patch) with CDC7; the interaction is required for phosphorylation of MCM proteins and CLASPIN by CDC7. Interacts with PCNA. Interacts with FZR1. Phosphorylated. Undergoes ATR-dependent phosphorylation by CHEK1 during activation of DNA replication or damage checkpoints. Phosphorylation by CSNK1G1/CK1 promotes CHEK1 binding. Phosphorylated by CDC7 during DNA replication, phosphorylation inhibits interaction between the acidic patch and N-terminal segments leading to increased binding to DNA and PCNA. In terms of processing, ubiquitinated by the anaphase promoting complex/cyclosome (APC/C) during G1 phase, leading to its degradation by the proteasome. Ubiquitination is mediated via its interaction with FZR1/CDH1. Following DNA damage, it is deubiquitinated by USP28 in G2 phase, preventing its degradation. Post-translationally, proteolytically cleaved by caspase-7 (CASP7) in response to apoptosis, leading to its inactivation.

It localises to the nucleus. Functionally, required for checkpoint mediated cell cycle arrest in response to inhibition of DNA replication or to DNA damage induced by both ionizing and UV irradiation. Adapter protein which binds to BRCA1 and the checkpoint kinase CHEK1 and facilitates the ATR-dependent phosphorylation of both proteins. Also required to maintain normal rates of replication fork progression during unperturbed DNA replication. Binds directly to DNA, with particular affinity for branched or forked molecules and interacts with multiple protein components of the replisome such as the MCM2-7 complex and TIMELESS. Important for initiation of DNA replication, recruits kinase CDC7 to phosphorylate MCM2-7 components. The sequence is that of Claspin (Clspn) from Mus musculus (Mouse).